The sequence spans 182 residues: UPF0397 protein SPT_0523 (182 aa).

5 helical membrane passes run 10 to 30, 46 to 66, 73 to 93, 109 to 129, and 148 to 168; these read VVAVGIGAALFVVIGMINIPT, LLSIIFGPIIGLLVGLIGHAI, YGLWWTWIIASGLFGLVVGLF, ILIFNLIQLLANALVWGVLAP, and IVAGIANGVSVAIAGTLLLLA.

The protein belongs to the UPF0397 family.

It localises to the cell membrane. In Streptococcus pneumoniae (strain Taiwan19F-14), this protein is UPF0397 protein SPT_0523.